Here is a 122-residue protein sequence, read N- to C-terminus: Large ribosomal subunit protein uL14 (122 aa).

Belongs to the universal ribosomal protein uL14 family. In terms of assembly, part of the 50S ribosomal subunit. Forms a cluster with proteins L3 and L19. In the 70S ribosome, L14 and L19 interact and together make contacts with the 16S rRNA in bridges B5 and B8.

Binds to 23S rRNA. Forms part of two intersubunit bridges in the 70S ribosome. This chain is Large ribosomal subunit protein uL14, found in Helicobacter acinonychis (strain Sheeba).